A 172-amino-acid polypeptide reads, in one-letter code: Phosphopantetheine adenylyltransferase (172 aa).

A substrate-binding site is contributed by T13. Residues 13–14 and H21 contribute to the ATP site; that span reads TF. The substrate site is built by K45, L81, and R95. ATP contacts are provided by residues 96–98, E106, and 131–137; these read GLR and SQFISSR.

This sequence belongs to the bacterial CoaD family. Homohexamer. Requires Mg(2+) as cofactor.

It localises to the cytoplasm. It carries out the reaction (R)-4'-phosphopantetheine + ATP + H(+) = 3'-dephospho-CoA + diphosphate. The protein operates within cofactor biosynthesis; coenzyme A biosynthesis; CoA from (R)-pantothenate: step 4/5. Functionally, reversibly transfers an adenylyl group from ATP to 4'-phosphopantetheine, yielding dephospho-CoA (dPCoA) and pyrophosphate. The chain is Phosphopantetheine adenylyltransferase from Rhodospirillum rubrum (strain ATCC 11170 / ATH 1.1.1 / DSM 467 / LMG 4362 / NCIMB 8255 / S1).